We begin with the raw amino-acid sequence, 431 residues long: Adenosylhomocysteinase (431 aa).

The substrate site is built by threonine 56, aspartate 131, and glutamate 156. An NAD(+)-binding site is contributed by 157-159 (TTT). Substrate-binding residues include lysine 186 and aspartate 190. NAD(+) contacts are provided by residues asparagine 191, 222 to 227 (GDVGKG), glutamate 243, 299 to 301 (IGH), and asparagine 345.

Belongs to the adenosylhomocysteinase family. As to quaternary structure, homotetramer. It depends on NAD(+) as a cofactor.

The catalysed reaction is S-adenosyl-L-homocysteine + H2O = L-homocysteine + adenosine. It functions in the pathway amino-acid biosynthesis; L-homocysteine biosynthesis; L-homocysteine from S-adenosyl-L-homocysteine: step 1/1. Adenosylhomocysteine is a competitive inhibitor of S-adenosyl-L-methionine-dependent methyl transferase reactions; therefore adenosylhomocysteinase may play a key role in the control of methylations via regulation of the intracellular concentration of adenosylhomocysteine. This chain is Adenosylhomocysteinase (sahA), found in Dictyostelium discoideum (Social amoeba).